We begin with the raw amino-acid sequence, 198 residues long: Single-stranded DNA cytosine deaminase (198 aa).

The short motif at 1 to 30 (MDSLLMKQRKFLYHFKNVRWAKGRHETYLC) is the Bipartite nuclear localization signal element. The segment at 2 to 26 (DSLLMKQRKFLYHFKNVRWAKGRHE) is interaction with SUPT6H. The CMP/dCMP-type deaminase domain occupies 23–129 (GRHETYLCYV…KAEPEGLRRL (107 aa)). Residue Thr-27 is modified to Phosphothreonine; by PKA. Ser-38 is modified (phosphoserine; by PKA). Positions 39 to 42 (ATSF) are important for interaction with CTNNBL1. His-56 lines the Zn(2+) pocket. The Proton donor role is filled by Glu-58. Positions 87 and 90 each coordinate Zn(2+). Positions 88 to 116 (YDCARHVADFLRGYPNLSLRIFAARLYFC) are required for interaction with RNF126. Positions 183-198 (LYEVDDLRDAFRTLGL) match the Nuclear export signal motif.

The protein belongs to the cytidine and deoxycytidylate deaminase family. In terms of assembly, interacts with CTNNBL1; the interaction is important for the immunoglobulin switch activity of AICDA. Interacts (via its NLS) with KPNA1. Interacts with PKA/PRKACA and PRKAR1A/PKR1. Interacts with SUPT6H, TRIM28 and NCL. Directly interacts with MCM3AP; this interaction may favor AICDA recruitment to immunoglobulin variable region genes, hence promoting somatic hypermutations. Zn(2+) serves as cofactor. Post-translationally, ser-38 is the major site whereas Thr-27 is the minor site of phosphorylation. Phosphorylation regulates its class-switch recombination activity. In terms of processing, probably monoubiquitinated on several residues by RNF126. Expressed in thymus, lung, spleen, kidney, small intestine, lymph node and tonsil.

The protein localises to the nucleus. It is found in the cytoplasm. It catalyses the reaction a 2'-deoxycytidine in single-stranded DNA + H2O + H(+) = a 2'-deoxyuridine in single-stranded DNA + NH4(+). Its function is as follows. Single-stranded DNA-specific cytidine deaminase. Involved in somatic hypermutation (SHM), gene conversion, and class-switch recombination (CSR) in B-lymphocytes by deaminating C to U during transcription of Ig-variable (V) and Ig-switch (S) region DNA. Required for several crucial steps of B-cell terminal differentiation necessary for efficient antibody responses. May also play a role in the epigenetic regulation of gene expression by participating in DNA demethylation. The chain is Single-stranded DNA cytosine deaminase (AICDA) from Canis lupus familiaris (Dog).